A 363-amino-acid chain; its full sequence is MKAFLVLDNGMILEGESFGYESESVGEIVFNTSMAGYQEILTDPSYCNQIITLTYPMIGNYGIHPDNMESSKIQASGLIVREYVDLPSNFMSQKTLSKFLKEYQIPAIQGIDTRKLTRYIRTNGSPNGGIFVAREYSPEFLEKVKSFPGITGTDLAKVVTTSTKYIFGTHTGKKYKLAVYDYGVKTNILRLLDAAGFAVTVYPALTPAEEIMKEGTDAFFLSNGPGDPAPLDYAIDATRKIMEKGYPLFGICLGHQIIGLSLGKKTEKMKFGHRGGNQPVKNLSTGQVEITSQNHGFAVIDDGKSSEPVSFLNLNDNTVEGILKSGYPLLTVQYHPESAPGPNDSRYLFQKFYDLVETTKRGK.

The segment at 1–172 (MKAFLVLDNG…TKYIFGTHTG (172 aa)) is CPSase. L-glutamine-binding residues include S45, G224, and G226. Residues 176 to 362 (KLAVYDYGVK…YDLVETTKRG (187 aa)) form the Glutamine amidotransferase type-1 domain. Residue C252 is the Nucleophile of the active site. The L-glutamine site is built by L253, Q256, N294, G296, and F297. Catalysis depends on residues H335 and E337.

Belongs to the CarA family. As to quaternary structure, composed of two chains; the small (or glutamine) chain promotes the hydrolysis of glutamine to ammonia, which is used by the large (or ammonia) chain to synthesize carbamoyl phosphate. Tetramer of heterodimers (alpha,beta)4.

It catalyses the reaction hydrogencarbonate + L-glutamine + 2 ATP + H2O = carbamoyl phosphate + L-glutamate + 2 ADP + phosphate + 2 H(+). The enzyme catalyses L-glutamine + H2O = L-glutamate + NH4(+). Its pathway is amino-acid biosynthesis; L-arginine biosynthesis; carbamoyl phosphate from bicarbonate: step 1/1. It functions in the pathway pyrimidine metabolism; UMP biosynthesis via de novo pathway; (S)-dihydroorotate from bicarbonate: step 1/3. Its function is as follows. Small subunit of the glutamine-dependent carbamoyl phosphate synthetase (CPSase). CPSase catalyzes the formation of carbamoyl phosphate from the ammonia moiety of glutamine, carbonate, and phosphate donated by ATP, constituting the first step of 2 biosynthetic pathways, one leading to arginine and/or urea and the other to pyrimidine nucleotides. The small subunit (glutamine amidotransferase) binds and cleaves glutamine to supply the large subunit with the substrate ammonia. This Leptospira borgpetersenii serovar Hardjo-bovis (strain L550) protein is Carbamoyl phosphate synthase small chain.